The sequence spans 381 residues: Creatine kinase M-type (381 aa).

One can recognise a Phosphagen kinase N-terminal domain in the interval 11–98 (KLNYKPEEEY…FDPIISDRHG (88 aa)). Residues 125-367 (YVLSSRVRTG…KLMVEMEKKL (243 aa)) form the Phosphagen kinase C-terminal domain. 128–132 (SSRVR) contacts ATP. Phosphoserine is present on Ser-164. Position 166 is a phosphothreonine (Thr-166). Ser-178 carries the post-translational modification Phosphoserine. Thr-180 carries the post-translational modification Phosphothreonine. Position 191 (His-191) interacts with ATP. Ser-199 bears the Phosphoserine mark. ATP contacts are provided by Arg-236 and Arg-292. Thr-313 and Thr-322 each carry phosphothreonine. ATP-binding positions include 320 to 325 (RGTGGV) and Asp-335. The residue at position 372 (Ser-372) is a Phosphoserine.

This sequence belongs to the ATP:guanido phosphotransferase family. In terms of assembly, dimer of identical or non-identical chains, which can be either B (brain type) or M (muscle type). With MM being the major form in skeletal muscle and myocardium, MB existing in myocardium, and BB existing in many tissues, especially brain.

Its subcellular location is the cytoplasm. The enzyme catalyses creatine + ATP = N-phosphocreatine + ADP + H(+). Functionally, reversibly catalyzes the transfer of phosphate between ATP and various phosphogens (e.g. creatine phosphate). Creatine kinase isoenzymes play a central role in energy transduction in tissues with large, fluctuating energy demands, such as skeletal muscle, heart, brain and spermatozoa. This Homo sapiens (Human) protein is Creatine kinase M-type (CKM).